Here is a 150-residue protein sequence, read N- to C-terminus: Aspartate 1-decarboxylase (150 aa).

Residue Ser25 is the Schiff-base intermediate with substrate; via pyruvic acid of the active site. Ser25 carries the pyruvic acid (Ser) modification. Position 57 (Thr57) interacts with substrate. The Proton donor role is filled by Tyr58. Residue 73 to 75 coordinates substrate; that stretch reads GAA.

This sequence belongs to the PanD family. Heterooctamer of four alpha and four beta subunits. It depends on pyruvate as a cofactor. In terms of processing, is synthesized initially as an inactive proenzyme, which is activated by self-cleavage at a specific serine bond to produce a beta-subunit with a hydroxyl group at its C-terminus and an alpha-subunit with a pyruvoyl group at its N-terminus.

Its subcellular location is the cytoplasm. The enzyme catalyses L-aspartate + H(+) = beta-alanine + CO2. The protein operates within cofactor biosynthesis; (R)-pantothenate biosynthesis; beta-alanine from L-aspartate: step 1/1. Functionally, catalyzes the pyruvoyl-dependent decarboxylation of aspartate to produce beta-alanine. In Kocuria rhizophila (strain ATCC 9341 / DSM 348 / NBRC 103217 / DC2201), this protein is Aspartate 1-decarboxylase.